We begin with the raw amino-acid sequence, 145 residues long: Ribosomal RNA large subunit methyltransferase H (145 aa).

S-adenosyl-L-methionine contacts are provided by residues L64, G93, and 112 to 117; that span reads LSPLTF.

The protein belongs to the RNA methyltransferase RlmH family. In terms of assembly, homodimer.

The protein resides in the cytoplasm. It carries out the reaction pseudouridine(1915) in 23S rRNA + S-adenosyl-L-methionine = N(3)-methylpseudouridine(1915) in 23S rRNA + S-adenosyl-L-homocysteine + H(+). Its function is as follows. Specifically methylates the pseudouridine at position 1915 (m3Psi1915) in 23S rRNA. The chain is Ribosomal RNA large subunit methyltransferase H from Prochlorococcus marinus (strain MIT 9211).